Here is a 426-residue protein sequence, read N- to C-terminus: MSVTVVLGSQWGDEGKGKLVDILSAEVDICAHCAGGSNAGHTIVVPVGPEDLRVPFAPQWCLLNPACTGLIGSGVVVHLPSLFSELDALAAQGLDCTNRLFISDRAHLVFDFHRIVDGLKEVELGGSWYHWDNQKWIGPAYSSKASRSGLRVHHLFDDTFAEKFRKLVEGWFKRYGKFEYDTEGEILRYKVLAERLRPCVIDCVVYIHHAISSGKRVLVEGANALMLDLDFGTYPFVTSSSTSVGGVCTGLGIPPKMIGKPIGVVKAYTTRVGGGPFPTEQLNDVGTHLQEVGREFGTNTGRRRRCGWLDLVVLKYSCMINGFDTLNITKLDILDKLPEIKVGVKYLVDGKELSGFPADLDLLAKVDVEYATLPGWNTSIVDVTSCDALPENCRKYIEYIETFLGVPVEWIGVGPGRNSMLIKEVT.

GTP-binding positions include 12–18 (GDEGKGK) and 40–42 (GHT). Residue aspartate 13 is the Proton acceptor of the active site. The Mg(2+) site is built by aspartate 13 and glycine 40. IMP contacts are provided by residues 13–16 (DEGK), 38–41 (NAGH), arginine 147, asparagine 223, threonine 238, and arginine 302. The active-site Proton donor is the histidine 41. 298 to 304 (TNTGRRR) provides a ligand contact to substrate. GTP contacts are provided by residues arginine 304, 330–332 (KLD), and 412–414 (GVG).

Belongs to the adenylosuccinate synthetase family. Homodimer. It depends on Mg(2+) as a cofactor.

The protein localises to the cytoplasm. It catalyses the reaction IMP + L-aspartate + GTP = N(6)-(1,2-dicarboxyethyl)-AMP + GDP + phosphate + 2 H(+). Its pathway is purine metabolism; AMP biosynthesis via de novo pathway; AMP from IMP: step 1/2. Plays an important role in the de novo pathway and in the salvage pathway of purine nucleotide biosynthesis. Catalyzes the first committed step in the biosynthesis of AMP from IMP. This Laccaria bicolor (strain S238N-H82 / ATCC MYA-4686) (Bicoloured deceiver) protein is Adenylosuccinate synthetase 2.